The sequence spans 389 residues: Chalcone synthase 6 (389 aa).

Residue Cys-164 is part of the active site.

Belongs to the thiolase-like superfamily. Chalcone/stilbene synthases family.

The catalysed reaction is (E)-4-coumaroyl-CoA + 3 malonyl-CoA + 3 H(+) = 2',4,4',6'-tetrahydroxychalcone + 3 CO2 + 4 CoA. It participates in secondary metabolite biosynthesis; flavonoid biosynthesis. In terms of biological role, the primary product of this enzyme is 4,2',4',6'-tetrahydroxychalcone (also termed naringenin-chalcone or chalcone) which can under specific conditions spontaneously isomerize into naringenin. The polypeptide is Chalcone synthase 6 (CHS6) (Pisum sativum (Garden pea)).